Here is a 157-residue protein sequence, read N- to C-terminus: Class-10 pathogenesis-related protein 1 (157 aa).

This sequence belongs to the BetVI family. In terms of tissue distribution, expressed in roots. Detected in nodules and leaves, but not in stems and flowers.

This Medicago truncatula (Barrel medic) protein is Class-10 pathogenesis-related protein 1 (PR10-1).